The chain runs to 600 residues: UvrABC system protein C (600 aa).

The region spanning 15 to 100 is the GIY-YIG domain; that stretch reads NSAGVYEYFN…IKQLHPKYNI (86 aa). The UVR domain maps to 203–238; it reads SVLLKNLEKQMLVLAQNENYEEAAKIRDQIATIKDL.

Belongs to the UvrC family. In terms of assembly, interacts with UvrB in an incision complex.

The protein localises to the cytoplasm. The UvrABC repair system catalyzes the recognition and processing of DNA lesions. UvrC both incises the 5' and 3' sides of the lesion. The N-terminal half is responsible for the 3' incision and the C-terminal half is responsible for the 5' incision. This chain is UvrABC system protein C, found in Campylobacter jejuni subsp. doylei (strain ATCC BAA-1458 / RM4099 / 269.97).